Reading from the N-terminus, the 214-residue chain is ATP-dependent Clp protease proteolytic subunit (214 aa).

Residue Ser-114 is the Nucleophile of the active site. His-139 is an active-site residue.

Belongs to the peptidase S14 family. In terms of assembly, fourteen ClpP subunits assemble into 2 heptameric rings which stack back to back to give a disk-like structure with a central cavity, resembling the structure of eukaryotic proteasomes.

It localises to the cytoplasm. It catalyses the reaction Hydrolysis of proteins to small peptides in the presence of ATP and magnesium. alpha-casein is the usual test substrate. In the absence of ATP, only oligopeptides shorter than five residues are hydrolyzed (such as succinyl-Leu-Tyr-|-NHMec, and Leu-Tyr-Leu-|-Tyr-Trp, in which cleavage of the -Tyr-|-Leu- and -Tyr-|-Trp bonds also occurs).. Functionally, cleaves peptides in various proteins in a process that requires ATP hydrolysis. Has a chymotrypsin-like activity. Plays a major role in the degradation of misfolded proteins. This is ATP-dependent Clp protease proteolytic subunit from Nitrosomonas europaea (strain ATCC 19718 / CIP 103999 / KCTC 2705 / NBRC 14298).